A 190-amino-acid chain; its full sequence is Selenoprotein S (190 aa).

A helical transmembrane segment spans residues 28-48; sequence SLLASYGWYILFSCVLLYIVI. Residues 78–90 are VCP/p97-interacting motif (VIM); sequence RQEALAAARLRMQ. The tract at residues 96–190 is disordered; sequence QVEKHKEKQR…RRGPSSGGUS (95 aa). Residues 97–118 show a composition bias toward basic and acidic residues; the sequence is VEKHKEKQRQLEEEKRRQKIEM. A compositionally biased stretch (gly residues) spans 160–174; the sequence is RGGGYNPLTGEGGGT. A non-standard amino acid (selenocysteine) is located at residue Sec189.

The protein belongs to the selenoprotein S family. As to quaternary structure, interacts with DERL1 and (via VIM motif) with VCP, suggesting that it forms a membrane complex with DERL1 that serves as a receptor for VCP. Also interacts with DERL2, DERL3 and SELENOK. The SELENOK-SELENOS complex interacts with VCP. Interacts with CCDC47. Truncated SELENOS proteins produced by failed UGA/Sec decoding are ubiquitinated by the CRL2(KLHDC2) and CRL2(KLHDC3) complexes, which recognizes the glycine (Gly) at the C-terminus of truncated SELENOS proteins. Truncated SELENOS proteins produced by failed UGA/Sec decoding are also ubiquitinated by the CRL5(KLHDC1) complex.

Its subcellular location is the endoplasmic reticulum membrane. It localises to the cytoplasm. Functionally, involved in the degradation process of misfolded endoplasmic reticulum (ER) luminal proteins. Participates in the transfer of misfolded proteins from the ER to the cytosol, where they are destroyed by the proteasome in a ubiquitin-dependent manner. Probably acts by serving as a linker between DERL1, which mediates the retrotranslocation of misfolded proteins into the cytosol, and the ATPase complex VCP, which mediates the translocation and ubiquitination. This Rattus norvegicus (Rat) protein is Selenoprotein S.